We begin with the raw amino-acid sequence, 352 residues long: MDKVDLLSLTMEEMESLFLEIGEKKFRAKQAFQWVNKGIKQYEEMTNLSKKLIKQLSEETRITHNRIEEKFVSKIDGTVKYLFLLDDGHIIEGVLMKYKHGFTACISTQVGCAMGCQFCASTTGGLIRNLRAGEMIDQILLMQQDQGERISNIVLMGSGEPLHNYDETIRFLKIVNDPEGLNIGNRHITLSTCGLVPEIKKLGALQIPINLAISLHAPNDQLRKQTMPIAQKYTIDQLIQSCYDYLENNNRRITFEYALIEDVNDGEKEAHELSKLLKGLLCHVNLIPINPIEERTYQKSKDSQVKKFQQILKSNGIEATIRREMGTDIQGACGQLRRKYVDDQEKKEISEV.

The Proton acceptor role is filled by glutamate 92. In terms of domain architecture, Radical SAM core spans 98–328 (YKHGFTACIS…ATIRREMGTD (231 aa)). Cysteine 105 and cysteine 333 form a disulfide bridge. Cysteine 112, cysteine 116, and cysteine 119 together coordinate [4Fe-4S] cluster. S-adenosyl-L-methionine-binding positions include 159 to 160 (GE), serine 191, 214 to 216 (SLH), and asparagine 290. Cysteine 333 functions as the S-methylcysteine intermediate in the catalytic mechanism.

Belongs to the radical SAM superfamily. RlmN family. It depends on [4Fe-4S] cluster as a cofactor.

It localises to the cytoplasm. It carries out the reaction adenosine(2503) in 23S rRNA + 2 reduced [2Fe-2S]-[ferredoxin] + 2 S-adenosyl-L-methionine = 2-methyladenosine(2503) in 23S rRNA + 5'-deoxyadenosine + L-methionine + 2 oxidized [2Fe-2S]-[ferredoxin] + S-adenosyl-L-homocysteine. The catalysed reaction is adenosine(37) in tRNA + 2 reduced [2Fe-2S]-[ferredoxin] + 2 S-adenosyl-L-methionine = 2-methyladenosine(37) in tRNA + 5'-deoxyadenosine + L-methionine + 2 oxidized [2Fe-2S]-[ferredoxin] + S-adenosyl-L-homocysteine. Its function is as follows. Specifically methylates position 2 of adenine 2503 in 23S rRNA and position 2 of adenine 37 in tRNAs. The polypeptide is Probable dual-specificity RNA methyltransferase RlmN (Alkaliphilus metalliredigens (strain QYMF)).